A 398-amino-acid polypeptide reads, in one-letter code: DNA replication and repair protein RecF (398 aa).

30–37 lines the ATP pocket; that stretch reads GSNGLGKT.

It belongs to the RecF family.

The protein resides in the cytoplasm. In terms of biological role, the RecF protein is involved in DNA metabolism; it is required for DNA replication and normal SOS inducibility. RecF binds preferentially to single-stranded, linear DNA. It also seems to bind ATP. This chain is DNA replication and repair protein RecF, found in Renibacterium salmoninarum (strain ATCC 33209 / DSM 20767 / JCM 11484 / NBRC 15589 / NCIMB 2235).